Here is a 1040-residue protein sequence, read N- to C-terminus: Multidrug resistance protein MdtB (1040 aa).

The next 12 helical transmembrane spans lie at 25–45 (LLMA…PVAA), 347–367 (LMLA…NIPA), 369–389 (IIPG…MVFL), 396–416 (LTLM…IVVI), 440–460 (IGFT…PLLF), 472–492 (FAVT…TLTP), 537–557 (WLTL…WIVI), 863–883 (LGST…VLGV), 888–908 (FIHP…ALLA), 910–930 (IIAG…LIGI), 968–988 (ILMT…STGV), and 998–1018 (IAMV…TPVI).

Belongs to the resistance-nodulation-cell division (RND) (TC 2.A.6) family. MdtB subfamily. Part of a tripartite efflux system composed of MdtA, MdtB and MdtC. MdtB forms a heteromultimer with MdtC.

The protein localises to the cell inner membrane. The sequence is that of Multidrug resistance protein MdtB from Salmonella agona (strain SL483).